A 302-amino-acid polypeptide reads, in one-letter code: MGEWTILERLLEAAVQQHSTMIGRILLTVVVIFRILVVAIVGETVYDDEQTMFVCNTLQPGCNQACYDKAFPISHIRYWVFQIIMVCTPSLCFITYSVHQSSKQRERQYSTVFITLDKDKKREDNKIKNTTVNGVLQNSEFFTKEMQSDFLEVKEMQNSAARNSKMSKIRRQEGISRFYIIQVVFRNALEIGFLMGQYFLYGFKVPSMYECNRYPCVKMVECYVSRPTEKTVFLVFMFAVSGLCVILNLAELNHLGWRKIKTAVRGAQERRKSIYEIRNKDSPHRIGVPNFGRTQSSDSAYV.

At 1–19 the chain is on the cytoplasmic side; sequence MGEWTILERLLEAAVQQHS. Residues 20–42 traverse the membrane as a helical segment; it reads TMIGRILLTVVVIFRILVVAIVG. The Extracellular portion of the chain corresponds to 43-75; sequence ETVYDDEQTMFVCNTLQPGCNQACYDKAFPISH. A helical transmembrane segment spans residues 76–98; sequence IRYWVFQIIMVCTPSLCFITYSV. At 99 to 177 the chain is on the cytoplasmic side; sequence HQSSKQRERQ…KIRRQEGISR (79 aa). Residues 178–200 traverse the membrane as a helical segment; sequence FYIIQVVFRNALEIGFLMGQYFL. The Extracellular portion of the chain corresponds to 201-232; sequence YGFKVPSMYECNRYPCVKMVECYVSRPTEKTV. The chain crosses the membrane as a helical span at residues 233 to 255; that stretch reads FLVFMFAVSGLCVILNLAELNHL. Residues 256-302 are Cytoplasmic-facing; that stretch reads GWRKIKTAVRGAQERRKSIYEIRNKDSPHRIGVPNFGRTQSSDSAYV.

The protein belongs to the connexin family. Delta-type subfamily. As to quaternary structure, a connexon is composed of a hexamer of connexins. In terms of tissue distribution, retinal specific.

It localises to the cell membrane. Its subcellular location is the cell junction. It is found in the gap junction. In terms of biological role, one gap junction consists of a cluster of closely packed pairs of transmembrane channels, the connexons, through which materials of low MW diffuse from one cell to a neighboring cell. The sequence is that of Gap junction delta-2 protein from Leucoraja erinaceus (Little skate).